A 158-amino-acid polypeptide reads, in one-letter code: NADH-quinone oxidoreductase subunit B 1 (158 aa).

[4Fe-4S] cluster contacts are provided by cysteine 37, cysteine 38, cysteine 102, and cysteine 132.

Belongs to the complex I 20 kDa subunit family. As to quaternary structure, NDH-1 is composed of 14 different subunits. Subunits NuoB, C, D, E, F, and G constitute the peripheral sector of the complex. [4Fe-4S] cluster serves as cofactor.

It localises to the cell inner membrane. The enzyme catalyses a quinone + NADH + 5 H(+)(in) = a quinol + NAD(+) + 4 H(+)(out). Its function is as follows. NDH-1 shuttles electrons from NADH, via FMN and iron-sulfur (Fe-S) centers, to quinones in the respiratory chain. Couples the redox reaction to proton translocation (for every two electrons transferred, four hydrogen ions are translocated across the cytoplasmic membrane), and thus conserves the redox energy in a proton gradient. The sequence is that of NADH-quinone oxidoreductase subunit B 1 from Azoarcus sp. (strain BH72).